We begin with the raw amino-acid sequence, 385 residues long: 1-deoxy-D-xylulose 5-phosphate reductoisomerase (385 aa).

T10, G11, S12, I13, K37, and N124 together coordinate NADPH. A 1-deoxy-D-xylulose 5-phosphate-binding site is contributed by K125. E126 is an NADPH binding site. A Mn(2+)-binding site is contributed by D150. Residues S151, E152, S176, and H199 each coordinate 1-deoxy-D-xylulose 5-phosphate. E152 provides a ligand contact to Mn(2+). NADPH is bound at residue G205. Positions 212, 217, 218, and 221 each coordinate 1-deoxy-D-xylulose 5-phosphate. Residue E221 coordinates Mn(2+).

Belongs to the DXR family. Requires Mg(2+) as cofactor. Mn(2+) serves as cofactor.

It carries out the reaction 2-C-methyl-D-erythritol 4-phosphate + NADP(+) = 1-deoxy-D-xylulose 5-phosphate + NADPH + H(+). It participates in isoprenoid biosynthesis; isopentenyl diphosphate biosynthesis via DXP pathway; isopentenyl diphosphate from 1-deoxy-D-xylulose 5-phosphate: step 1/6. Its function is as follows. Catalyzes the NADPH-dependent rearrangement and reduction of 1-deoxy-D-xylulose-5-phosphate (DXP) to 2-C-methyl-D-erythritol 4-phosphate (MEP). In Clostridium botulinum (strain Kyoto / Type A2), this protein is 1-deoxy-D-xylulose 5-phosphate reductoisomerase.